Reading from the N-terminus, the 185-residue chain is Large ribosomal subunit protein uL22 (185 aa).

Residues 160–185 form a disordered region; it reads VSHDDSQKKKVSKKKLARQKEKMMRE.

Belongs to the universal ribosomal protein uL22 family.

In Maconellicoccus hirsutus (Pink hibiscus mealybug), this protein is Large ribosomal subunit protein uL22 (RpL17).